Here is a 460-residue protein sequence, read N- to C-terminus: NADH-ubiquinone oxidoreductase chain 4 (460 aa).

Helical transmembrane passes span 22–42, 61–81, 97–114, 118–140, 149–169, 196–216, 226–246, 259–279, 286–305, 309–331, 352–372, 395–415, and 437–457; these read WLWP…LSWL, PLST…ILAS, YISL…AFSA, IMFY…RWGN, TYFL…LLLL, IWWT…GVHL, PIAG…YGMM, LSYP…SICM, SLIA…GILI, WGFT…LFCL, MALP…LALP, IALT…MFLM, and LLIA…ELIW.

It belongs to the complex I subunit 4 family.

The protein resides in the mitochondrion membrane. The enzyme catalyses a ubiquinone + NADH + 5 H(+)(in) = a ubiquinol + NAD(+) + 4 H(+)(out). Functionally, core subunit of the mitochondrial membrane respiratory chain NADH dehydrogenase (Complex I) that is believed to belong to the minimal assembly required for catalysis. Complex I functions in the transfer of electrons from NADH to the respiratory chain. The immediate electron acceptor for the enzyme is believed to be ubiquinone. This chain is NADH-ubiquinone oxidoreductase chain 4 (MT-ND4), found in Tetraodon nigroviridis (Spotted green pufferfish).